A 417-amino-acid polypeptide reads, in one-letter code: MRVVILGSGVIGVTSAWYLAQAGHQVTVVDRQEGPGLETSAANAGQISPGYAAPWAAPGIPLKALKWLFQRHAPLAMSLDGSLFQLRWLWQMLRNCDSTHYAQNKARMVRLAEYSRDCLAQLRRTTTIDYEGRQLGTLQLFRTPQQYENAARDIAVLREAGVPYRLLPTAQLSTVEPALAVAGVRLSGGLHLPHDETGDCQLFTRHLAQQAAQSGVHFIFSTQVLRLLRSGARIQGVQCGHDTLVADAYVVALGAYSTGLLQDIVAIPVYPLKGYSLTLPIDDPDAAPRSTVLDESYKVAITRFDRRIRVGGMAEVVGFDMSLPLARRRTLERVVRDLYPRGGLLPQASFWSGLRPATPDGTPLVGATPLENLYLNTGHGTLGWTMACGSGQLLADIISGVTPTIRVDDLSVSRYTA.

Position 3 to 17 (3 to 17 (VVILGSGVIGVTSAW)) interacts with FAD.

The protein belongs to the DadA oxidoreductase family. FAD serves as cofactor.

It carries out the reaction a D-alpha-amino acid + A + H2O = a 2-oxocarboxylate + AH2 + NH4(+). It functions in the pathway amino-acid degradation; D-alanine degradation; NH(3) and pyruvate from D-alanine: step 1/1. Oxidative deamination of D-amino acids. This chain is D-amino acid dehydrogenase, found in Edwardsiella ictaluri (strain 93-146).